Consider the following 355-residue polypeptide: Guanine nucleotide-binding protein alpha-12 subunit (355 aa).

The G-alpha domain occupies 28 to 355; sequence RQINLLLLGS…EQNLKTLMMQ (328 aa). The interval 31 to 44 is G1 motif; that stretch reads NLLLLGSGESGKST. Residues 36-43, 176-182, 201-205, 270-273, and A327 contribute to the GTP site; these read GSGESGKS, LFCRKAT, DVGGQ, and NKND. Positions 43 and 182 each coordinate Mg(2+). Residues 174–182 are G2 motif; the sequence is DILFCRKAT. Residues 197 to 206 form a G3 motif region; the sequence is FRFIDVGGQR. The G4 motif stretch occupies residues 266-273; that stretch reads ILFMNKND. Residues 325-330 are G5 motif; the sequence is TTAVDT.

This sequence belongs to the G-alpha family. G proteins are composed of 3 units; alpha, beta and gamma. The alpha chain contains the guanine nucleotide binding site.

Functionally, guanine nucleotide-binding proteins (G proteins) are involved as modulators or transducers in various transmembrane signaling systems. May play a role in resistance to fungal infection in the epidermis by regulating the up-regulation of several antimicrobial peptides of the NLP and CNC families. Upstream of plc-3, egl-8, tpa-1 and the p38-like pathway, required for the expression of antimicrobial peptide nlp-29 in the epidermis in response to fungal infection or physical injury. The sequence is that of Guanine nucleotide-binding protein alpha-12 subunit (gpa-12) from Caenorhabditis briggsae.